The sequence spans 404 residues: Glycosyltransferase GlyB (404 aa).

Residues 1-267 (MNTKSIVFNA…ILLRKDIISR (267 aa)) are GT8 domain. Residues 9–14 (NADNDY) and 103–104 (DS) contribute to the UDP site. Mn(2+)-binding residues include D103, D105, and H228. 228-233 (HYTGVK) provides a ligand contact to UDP.

In the N-terminal section; belongs to the glycosyltransferase 8 family.

May be involved in the polymorphic O-glycosylation of the serine-rich repeat protein PsrP. Has equal hydrolytic activity against both UDP-galactose and UDP-glucose; no glycosyltransferase activity has been seen with tested substrates. The polypeptide is Glycosyltransferase GlyB (Streptococcus pneumoniae serotype 4 (strain ATCC BAA-334 / TIGR4)).